We begin with the raw amino-acid sequence, 244 residues long: 14-3-3 protein homolog 1 (244 aa).

This sequence belongs to the 14-3-3 family.

The polypeptide is 14-3-3 protein homolog 1 (Echinococcus granulosus (Hydatid tapeworm)).